Reading from the N-terminus, the 549-residue chain is Undecaprenyl phosphate-alpha-4-amino-4-deoxy-L-arabinose arabinosyl transferase (549 aa).

12 consecutive transmembrane segments (helical) span residues 9–29, 80–100, 112–132, 136–156, 166–186, 204–224, 256–276, 288–308, 312–332, 346–366, 376–396, and 402–422; these read LLLI…GLWI, LFGV…LAYL, SLAC…SGYA, PQFT…LDAG, ILLG…AWLL, LLGY…PWAL, PWWF…GLLP, QAPV…FSLS, LPTY…HALV, NGLL…YLQL, FELF…LAQW, and AWAA…AAMP.

The protein belongs to the glycosyltransferase 83 family.

It is found in the cell inner membrane. The enzyme catalyses 4-amino-4-deoxy-alpha-L-arabinopyranosyl di-trans,octa-cis-undecaprenyl phosphate + lipid IVA = lipid IIA + di-trans,octa-cis-undecaprenyl phosphate.. Its pathway is lipopolysaccharide metabolism; 4-amino-4-deoxy-beta-L-arabinose-lipid A biosynthesis. In terms of biological role, catalyzes the transfer of the L-Ara4N moiety of the glycolipid undecaprenyl phosphate-alpha-L-Ara4N to lipid A. The modified arabinose is attached to lipid A and is required for resistance to polymyxin and cationic antimicrobial peptides. The polypeptide is Undecaprenyl phosphate-alpha-4-amino-4-deoxy-L-arabinose arabinosyl transferase (Pseudomonas aeruginosa (strain UCBPP-PA14)).